The chain runs to 618 residues: Origin recognition complex subunit 2 (618 aa).

Disordered regions lie at residues 1–116 (MSAS…AAKD) and 149–274 (NATP…KKSN). Thr-24 is subject to Phosphothreonine. 2 positions are modified to phosphoserine: Ser-26 and Ser-30. Residues 49–59 (TSRRSTRRPSP) show a composition bias toward basic residues. Positions 70–79 (SNGKGQEERI) are enriched in basic and acidic residues. Residues Ser-87, Ser-91, and Ser-92 each carry the phosphoserine modification. Residues 94–107 (AEDQEEEESIEESE) show a composition bias toward acidic residues. Phosphothreonine is present on residues Thr-151, Thr-154, Thr-157, Thr-160, Thr-167, Thr-170, and Thr-181. The span at 151–161 (TPCTPKTPKTP) shows a compositional bias: low complexity. Residues 183–193 (AHVRTRVKKQI) show a composition bias toward basic residues. Over residues 199 to 208 (DSDEDFSGDE) the composition is skewed to acidic residues. Residues 219 to 233 (SSSSSSSDAGNSSDN) show a composition bias toward low complexity. The residue at position 258 (Thr-258) is a Phosphothreonine. Ser-260 is subject to Phosphoserine.

The protein belongs to the ORC2 family. As to quaternary structure, ORC is composed of six subunits. Interacts with Mcm10. Interacts with CG9890. Interaction between the TREX-2/AMEX complex and the ORC complex is required for ORC localization to mRNPs, and consequently mRNA export.

The protein resides in the nucleus. It localises to the chromosome. It is found in the centromere. In terms of biological role, component of the origin recognition complex (ORC) that binds origins of replication. DNA-binding is ATP-dependent, however specific DNA sequences that define origins of replication have not been identified so far. ORC is required to assemble the pre-replication complex necessary to initiate DNA replication. As part of the ORC complex, might also have a role in mRNA export. The sequence is that of Origin recognition complex subunit 2 (Orc2) from Drosophila melanogaster (Fruit fly).